The chain runs to 157 residues: Arginine repressor (157 aa).

It belongs to the ArgR family.

It localises to the cytoplasm. It functions in the pathway amino-acid biosynthesis; L-arginine biosynthesis [regulation]. Its function is as follows. Regulates arginine biosynthesis genes. The chain is Arginine repressor from Bacteroides fragilis (strain ATCC 25285 / DSM 2151 / CCUG 4856 / JCM 11019 / LMG 10263 / NCTC 9343 / Onslow / VPI 2553 / EN-2).